Reading from the N-terminus, the 240-residue chain is 4-hydroxy-tetrahydrodipicolinate reductase (240 aa).

NAD(+) is bound by residues 79-81 (ATT) and 103-106 (SANM). H135 (proton donor/acceptor) is an active-site residue. Residue H136 participates in (S)-2,3,4,5-tetrahydrodipicolinate binding. The active-site Proton donor is K139. Residue 145–146 (GT) coordinates (S)-2,3,4,5-tetrahydrodipicolinate.

This sequence belongs to the DapB family.

It is found in the cytoplasm. The catalysed reaction is (S)-2,3,4,5-tetrahydrodipicolinate + NAD(+) + H2O = (2S,4S)-4-hydroxy-2,3,4,5-tetrahydrodipicolinate + NADH + H(+). It catalyses the reaction (S)-2,3,4,5-tetrahydrodipicolinate + NADP(+) + H2O = (2S,4S)-4-hydroxy-2,3,4,5-tetrahydrodipicolinate + NADPH + H(+). It participates in amino-acid biosynthesis; L-lysine biosynthesis via DAP pathway; (S)-tetrahydrodipicolinate from L-aspartate: step 4/4. Catalyzes the conversion of 4-hydroxy-tetrahydrodipicolinate (HTPA) to tetrahydrodipicolinate. The protein is 4-hydroxy-tetrahydrodipicolinate reductase of Staphylococcus aureus (strain Mu3 / ATCC 700698).